A 348-amino-acid polypeptide reads, in one-letter code: Flagellar P-ring protein (348 aa).

Residues methionine 1–alanine 16 form the signal peptide.

It belongs to the FlgI family. In terms of assembly, the basal body constitutes a major portion of the flagellar organelle and consists of four rings (L,P,S, and M) mounted on a central rod.

Its subcellular location is the periplasm. The protein resides in the bacterial flagellum basal body. Its function is as follows. Assembles around the rod to form the L-ring and probably protects the motor/basal body from shearing forces during rotation. In Campylobacter jejuni subsp. jejuni serotype O:6 (strain 81116 / NCTC 11828), this protein is Flagellar P-ring protein.